The following is a 116-amino-acid chain: Iron-sulfur cluster insertion protein ErpA (116 aa).

Residues C44, C108, and C110 each coordinate iron-sulfur cluster.

Belongs to the HesB/IscA family. As to quaternary structure, homodimer. The cofactor is iron-sulfur cluster.

Functionally, required for insertion of 4Fe-4S clusters for at least IspG. The protein is Iron-sulfur cluster insertion protein ErpA of Aeromonas hydrophila subsp. hydrophila (strain ATCC 7966 / DSM 30187 / BCRC 13018 / CCUG 14551 / JCM 1027 / KCTC 2358 / NCIMB 9240 / NCTC 8049).